The following is a 91-amino-acid chain: Small ribosomal subunit protein bS18 (91 aa).

Positions Met-1 to Arg-21 are disordered. Positions Gly-12–Arg-21 are enriched in basic residues.

Belongs to the bacterial ribosomal protein bS18 family. As to quaternary structure, part of the 30S ribosomal subunit. Forms a tight heterodimer with protein bS6.

Its function is as follows. Binds as a heterodimer with protein bS6 to the central domain of the 16S rRNA, where it helps stabilize the platform of the 30S subunit. The sequence is that of Small ribosomal subunit protein bS18 from Geotalea daltonii (strain DSM 22248 / JCM 15807 / FRC-32) (Geobacter daltonii).